The primary structure comprises 214 residues: Shikimate kinase (214 aa).

35-40 (GAGKST) provides a ligand contact to ATP. A Mg(2+)-binding site is contributed by S39. Substrate contacts are provided by D57, R81, and G103. R141 serves as a coordination point for ATP. R160 lines the substrate pocket.

It belongs to the shikimate kinase family. In terms of assembly, monomer. Mg(2+) serves as cofactor.

The protein resides in the cytoplasm. The enzyme catalyses shikimate + ATP = 3-phosphoshikimate + ADP + H(+). Its pathway is metabolic intermediate biosynthesis; chorismate biosynthesis; chorismate from D-erythrose 4-phosphate and phosphoenolpyruvate: step 5/7. Catalyzes the specific phosphorylation of the 3-hydroxyl group of shikimic acid using ATP as a cosubstrate. The chain is Shikimate kinase from Nitrobacter winogradskyi (strain ATCC 25391 / DSM 10237 / CIP 104748 / NCIMB 11846 / Nb-255).